A 222-amino-acid polypeptide reads, in one-letter code: 2-amino-5-formylamino-6-ribosylaminopyrimidin-4(3H)-one 5'-monophosphate deformylase (222 aa).

The Fe cation site is built by E29, H31, D40, and H108.

Belongs to the creatininase superfamily. FAPy deformylase family. Homodimer. Fe(2+) is required as a cofactor. Requires Zn(2+) as cofactor.

The catalysed reaction is 2-amino-5-formylamino-6-(5-phospho-D-ribosylamino)pyrimidin-4(3H)-one + H2O = 2,5-diamino-6-(1-D-ribosylamino)pyrimidin-4(3H)-one 5'-phosphate + formate + H(+). Its pathway is cofactor biosynthesis; coenzyme F420 biosynthesis. It functions in the pathway cofactor biosynthesis; riboflavin biosynthesis. Catalyzes the hydrolysis of the formamide of 2-amino-5-formylamino-6-ribosylamino-4(3H)-pyrimidinone 5'-monophosphate (FAPy) to form 2,5-diamino-6-ribosylamino-4(3H)-pyrimidinone 5'-phosphate (APy). The protein is 2-amino-5-formylamino-6-ribosylaminopyrimidin-4(3H)-one 5'-monophosphate deformylase of Methanocaldococcus infernus (strain DSM 11812 / JCM 15783 / ME).